Here is a 304-residue protein sequence, read N- to C-terminus: ULP1-interacting protein 4 (304 aa).

Residues 72-269 (DEYPKEVDEH…SIVKEGDANT (198 aa)) are disordered. Residues 73–83 (EYPKEVDEHSN) are compositionally biased toward basic and acidic residues. The segment covering 129–149 (TPSLKGNVTFPSPKTAISQDG) has biased composition (polar residues). Ser-140 is subject to Phosphoserine. A compositionally biased stretch (basic and acidic residues) spans 155-183 (ETTRKERKYEHAPLNEVPVERDPKEENKE). Phosphoserine occurs at positions 185 and 205.

As to quaternary structure, interacts with ULP1.

The protein localises to the endoplasmic reticulum membrane. Its subcellular location is the mitochondrion outer membrane. It localises to the nucleus envelope. This Saccharomyces cerevisiae (strain ATCC 204508 / S288c) (Baker's yeast) protein is ULP1-interacting protein 4 (UIP4).